The following is a 412-amino-acid chain: Aspartate kinase Ask_LysC (412 aa).

One can recognise an ACT domain in the interval 265–332; it reads LTIRGVPDTP…QGIAAEMGAR (68 aa).

The protein belongs to the aspartokinase family.

Its subcellular location is the cytoplasm. The enzyme catalyses L-aspartate + ATP = 4-phospho-L-aspartate + ADP. It participates in amino-acid biosynthesis; L-lysine biosynthesis via DAP pathway; (S)-tetrahydrodipicolinate from L-aspartate: step 1/4. The protein operates within amino-acid biosynthesis; L-methionine biosynthesis via de novo pathway; L-homoserine from L-aspartate: step 1/3. Its pathway is amino-acid biosynthesis; L-threonine biosynthesis; L-threonine from L-aspartate: step 1/5. With respect to regulation, allosterically and strongly feedback inhibited by tryptophan. Addition of lysine alone slightly enhances activity. The simultaneous addition of lysine and tryptophan leads to very strong feedback inhibition of the enzyme. The feedback control by tryptophan is reduced in the presence of the compatible solutes hydroxyectoine or ectoine. Involved in the biosynthesis of L-aspartate-beta-semialdehyde which is a central intermediate in the biosynthesis of different amino acids (L-lysine, L-methionine, L-threonine). Catalyzes the phosphorylation of the beta-carboxyl group of L-aspartate to yield 4-phospho-L-aspartate. The chain is Aspartate kinase Ask_LysC (lysC) from Stutzerimonas stutzeri (strain A1501) (Pseudomonas stutzeri).